A 1086-amino-acid chain; its full sequence is ATP-dependent helicase/deoxyribonuclease subunit B (1086 aa).

The protein belongs to the helicase family. AddB/RexB type 2 subfamily. Heterodimer of AddA and RexB. Requires Mg(2+) as cofactor.

The heterodimer acts as both an ATP-dependent DNA helicase and an ATP-dependent, dual-direction single-stranded exonuclease. Recognizes the chi site generating a DNA molecule suitable for the initiation of homologous recombination. This subunit has 5' -&gt; 3' nuclease activity but not helicase activity. This Streptococcus uberis (strain ATCC BAA-854 / 0140J) protein is ATP-dependent helicase/deoxyribonuclease subunit B.